Reading from the N-terminus, the 248-residue chain is DNA polymerase sliding clamp 2 (248 aa).

The protein belongs to the PCNA family. As to quaternary structure, homotrimer. The subunits circularize to form a toroid; DNA passes through its center. Replication factor C (RFC) is required to load the toroid on the DNA.

Functionally, sliding clamp subunit that acts as a moving platform for DNA processing. Responsible for tethering the catalytic subunit of DNA polymerase and other proteins to DNA during high-speed replication. The sequence is that of DNA polymerase sliding clamp 2 from Sulfurisphaera ohwakuensis.